The chain runs to 156 residues: Aspartate carbamoyltransferase regulatory chain (156 aa).

Cys-109, Cys-114, Cys-138, and Cys-141 together coordinate Zn(2+).

Belongs to the PyrI family. As to quaternary structure, contains catalytic and regulatory chains. Zn(2+) is required as a cofactor.

In terms of biological role, involved in allosteric regulation of aspartate carbamoyltransferase. The protein is Aspartate carbamoyltransferase regulatory chain of Baumannia cicadellinicola subsp. Homalodisca coagulata.